Reading from the N-terminus, the 856-residue chain is Facilitated trehalose transporter Tret1 (856 aa).

Disordered regions lie at residues 1-29 (MSGR…LKEK) and 62-202 (DPFL…KATS). Topologically, residues 1–389 (MSGRDNRGAG…LEVYRPTTNP (389 aa)) are cytoplasmic. Over residues 69 to 80 (VSPQRHPQTVRT) the composition is skewed to polar residues. Residues 133–142 (EIREHRDRQQ) show a composition bias toward basic and acidic residues. The span at 170-180 (GNSNTNSNKAA) shows a compositional bias: polar residues. A phosphoserine mark is found at Ser-247, Ser-248, Ser-249, Ser-319, and Ser-321. Residues 326–345 (LTSRQHFQQQRSISTDSRKS) are disordered. Polar residues predominate over residues 329 to 340 (RQHFQQQRSIST). A helical transmembrane segment spans residues 390–410 (IFIWTQVIAALSVSLGSLVVG). The Extracellular segment spans residues 411-439 (FVSAYTSPALVSMSDPNITSFTVTKDAGS). N-linked (GlcNAc...) asparagine glycosylation is present at Asn-427. The chain crosses the membrane as a helical span at residues 440 to 460 (WVGGIMPLAGLVGGVAGGPLI). Topologically, residues 461-472 (EYMGRRNTILAT) are cytoplasmic. A helical transmembrane segment spans residues 473–493 (AVPFIVSSLLIACAVNVAMVL). Residues 494-496 (CGR) are Extracellular-facing. Residues 497-517 (FLAGFCVGIASLSLPVYLGET) form a helical membrane-spanning segment. Residues 518 to 527 (VQPEVRGTLG) are Cytoplasmic-facing. A helical transmembrane segment spans residues 528–548 (LLPTAFGNIGILVCFVAGSFM). Asn-549 carries N-linked (GlcNAc...) asparagine glycosylation. Topologically, residues 549–551 (NWS) are extracellular. Residues 552–572 (MLAFLGAALPVPFLILMFLIP) form a helical membrane-spanning segment. At 573–635 (ETPRWYVSRG…ELLKRNNLKP (63 aa)) the chain is on the cytoplasmic side. A helical transmembrane segment spans residues 636-656 (LSISLGLMFFQQFSGINAVIF). The Extracellular segment spans residues 657–672 (YTVQIFKDAGSTIDGN). Residues 673–693 (VCTIIVGVVNFVATFIGILLI) traverse the membrane as a helical segment. Topologically, residues 694-699 (DRAGRK) are cytoplasmic. Residues 700–720 (ILLYASDIAMVLTLFVLGGFF) traverse the membrane as a helical segment. The Extracellular portion of the chain corresponds to 721–739 (YCKAHGPDVSHLGWLPLTC). A helical membrane pass occupies residues 740–760 (FVVYILGFSVGFGPIPWLMMG). Topologically, residues 761–766 (EILPAK) are cytoplasmic. The chain crosses the membrane as a helical span at residues 767 to 787 (IRGAAASVATSFNWTCTFVVT). At 788–800 (KTFQDLVGSLGAH) the chain is on the extracellular side. A helical membrane pass occupies residues 801–821 (GAFWLFGAICFVGLFFVILYV). The Cytoplasmic portion of the chain corresponds to 822–856 (PETQGKTLEDIERKMMGRVRRMSSVANIKPLSFNM). A phosphoserine mark is found at Ser-844 and Ser-845.

The protein belongs to the major facilitator superfamily. Sugar transporter (TC 2.A.1.1) family. Trehalose transporter subfamily.

The protein resides in the cell membrane. Functionally, low-capacity facilitative transporter for trehalose. Does not transport maltose, sucrose or lactose. Mediates the bidirectional transfer of trehalose. Responsible for the transport of trehalose synthesized in the fat body and the incorporation of trehalose into other tissues that require a carbon source, thereby regulating trehalose levels in the hemolymph. This Drosophila yakuba (Fruit fly) protein is Facilitated trehalose transporter Tret1.